A 493-amino-acid polypeptide reads, in one-letter code: Cytochrome P450 Tp9025 (493 aa).

The chain crosses the membrane as a helical; Signal-anchor for type II membrane protein span at residues 1-21 (MALYIIFLLIASSFILFSFIF). N-linked (GlcNAc...) asparagine glycans are attached at residues Asn209 and Asn411. Cys433 lines the heme pocket.

The protein belongs to the cytochrome P450 family. Heme serves as cofactor.

It is found in the membrane. Its pathway is secondary metabolite biosynthesis; terpenoid biosynthesis. In terms of biological role, probably involved in the biosynthesis of germacrene-derived sesquiterpene lactones. This chain is Cytochrome P450 Tp9025, found in Tanacetum parthenium (Feverfew).